Here is a 667-residue protein sequence, read N- to C-terminus: Acetolactate synthase 1, chloroplastic (667 aa).

Positions 1–35 (MAAAAPSPSSSAFSKTLSPSSSTSSTLLPRSTFPF) are enriched in low complexity. The tract at residues 1 to 45 (MAAAAPSPSSSAFSKTLSPSSSTSSTLLPRSTFPFPHHPHKTTPP) is disordered. A chloroplast-targeting transit peptide spans 1-94 (MAAAAPSPSS…VSRFAPDEPR (94 aa)). Thiamine diphosphate is bound at residue Glu141. A disulfide bridge connects residues Cys161 and Cys307. Residues Arg243, 349 to 370 (HGTVYANYAVDSSDLLLAFGVR), and 392 to 411 (DIDSAEIGKNKQPHVSICAD) contribute to the FAD site. The tract at residues 484 to 564 (QHQMWAAQYY…VKIMLLNNQH (81 aa)) is thiamine pyrophosphate binding. Positions 535 and 562 each coordinate Mg(2+).

The protein belongs to the TPP enzyme family. Requires Mg(2+) as cofactor. Thiamine diphosphate serves as cofactor.

The protein localises to the plastid. Its subcellular location is the chloroplast. It carries out the reaction 2 pyruvate + H(+) = (2S)-2-acetolactate + CO2. The protein operates within amino-acid biosynthesis; L-isoleucine biosynthesis; L-isoleucine from 2-oxobutanoate: step 1/4. It participates in amino-acid biosynthesis; L-valine biosynthesis; L-valine from pyruvate: step 1/4. This chain is Acetolactate synthase 1, chloroplastic (ALS SURA), found in Nicotiana tabacum (Common tobacco).